We begin with the raw amino-acid sequence, 214 residues long: Large ribosomal subunit protein bL25 (214 aa).

Residues 194–214 (TTEAEETAEPEVIRRKEEEEE) are disordered. Residues 204–214 (EVIRRKEEEEE) show a composition bias toward basic and acidic residues.

The protein belongs to the bacterial ribosomal protein bL25 family. CTC subfamily. As to quaternary structure, part of the 50S ribosomal subunit; part of the 5S rRNA/L5/L18/L25 subcomplex. Contacts the 5S rRNA. Binds to the 5S rRNA independently of L5 and L18.

In terms of biological role, this is one of the proteins that binds to the 5S RNA in the ribosome where it forms part of the central protuberance. The protein is Large ribosomal subunit protein bL25 of Thermotoga petrophila (strain ATCC BAA-488 / DSM 13995 / JCM 10881 / RKU-1).